Reading from the N-terminus, the 214-residue chain is MNDLSNYRKSYEKSELLETNIPEDPINLFNRWFHEVEDFGGSGEVNAMTVSTIGLDGFPKSRVVLLKKFSEEGFIFYTNYNSEKGKAIEANPNVCLSFFWQEAERQVIIKGIAQKTSEIISDNYFDSRPDGSKLGAIVSHQSEVIPSRTFLEENLKKLEAEFEGKPIPRPENWGGYLVTPLQVEFWQGRPNRLHDRIRYTSQSDFSWTIERLSS.

Substrate is bound by residues 8-11 (RKSY) and K67. FMN-binding positions include 62-67 (RVVLLK), 77-78 (YT), K84, and Q106. Residues Y124, R128, and S132 each coordinate substrate. Residues 141–142 (QS) and W186 contribute to the FMN site. 192-194 (RLH) contacts substrate. R196 contributes to the FMN binding site.

Belongs to the pyridoxamine 5'-phosphate oxidase family. In terms of assembly, homodimer. Requires FMN as cofactor.

The enzyme catalyses pyridoxamine 5'-phosphate + O2 + H2O = pyridoxal 5'-phosphate + H2O2 + NH4(+). It carries out the reaction pyridoxine 5'-phosphate + O2 = pyridoxal 5'-phosphate + H2O2. The protein operates within cofactor metabolism; pyridoxal 5'-phosphate salvage; pyridoxal 5'-phosphate from pyridoxamine 5'-phosphate: step 1/1. It participates in cofactor metabolism; pyridoxal 5'-phosphate salvage; pyridoxal 5'-phosphate from pyridoxine 5'-phosphate: step 1/1. In terms of biological role, catalyzes the oxidation of either pyridoxine 5'-phosphate (PNP) or pyridoxamine 5'-phosphate (PMP) into pyridoxal 5'-phosphate (PLP). This is Pyridoxine/pyridoxamine 5'-phosphate oxidase from Flavobacterium johnsoniae (strain ATCC 17061 / DSM 2064 / JCM 8514 / BCRC 14874 / CCUG 350202 / NBRC 14942 / NCIMB 11054 / UW101) (Cytophaga johnsonae).